The primary structure comprises 486 residues: Cephamycin export protein CmcT (486 aa).

A run of 14 helical transmembrane segments spans residues 24-44, 56-76, 88-108, 121-141, 153-173, 178-198, 210-230, 241-261, 284-304, 317-337, 345-365, 369-389, 418-438, and 450-470; these read VLACTAHFLVVFDTSVITVAL, ASLQWVVNSYTLAFAGLLLFG, VFLGGLAVFTLTSLIGGLATS, AGAAVLAPLAVTMLTTSFAEG, AVALVGGASGNLLGGVFTEFL, VLLVNVPIGIPVLFLAARVLA, LDLPGAVLATAGLTLLTLGVS, AVAVPLAGGLLALLAFVVVEA, LAMLLAGASQVPVWFFLTLSM, LGFVPHALVMLVVGLRVVPWL, VLIAAGAAIGALGFWWQSLLT, AYLGGILGPAVLISIGGGLVG, FGGAFGLAVLLTVTGSGTSGS, and FVGIAVFMLAIAVLTPVLPAL.

This sequence belongs to the major facilitator superfamily.

The protein localises to the cell membrane. Functionally, involved in cephamycin export. The sequence is that of Cephamycin export protein CmcT (cmcT) from Amycolatopsis lactamdurans (Nocardia lactamdurans).